A 307-amino-acid chain; its full sequence is Mitochondrial brown fat uncoupling protein 1 (307 aa).

Residues 1–10 lie on the Mitochondrial intermembrane side of the membrane; it reads MVSSTTSEVQ. Residues 11-32 traverse the membrane as a helical segment; that stretch reads PTMGVKIFSAGVSACLADIITF. Solcar repeat units follow at residues 11–102, 111–201, and 210–295; these read PTMG…VQEY, ASLG…MKGA, and DDVP…LKKE. Topologically, residues 33 to 73 are mitochondrial matrix; sequence PLDTAKVRLQIQGEGQASSTIRYKGVLGTITTLAKTEGLPK. Lys56 lines the fatty acid 16:0 pocket. A helical transmembrane segment spans residues 74–96; it reads LYSGLPAGIQRQISFASLRIGLY. Topologically, residues 97–116 are mitochondrial intermembrane; the sequence is DTVQEYFSSGRETPASLGSK. Residues 117–133 traverse the membrane as a helical segment; that stretch reads ISAGLMTGGVAVFIGQP. At 134–178 the chain is on the mitochondrial matrix side; that stretch reads TEVVKVRMQAQSHLHGIKPRYTGTYNAYRVIATTESLSTLWKGTT. A helical membrane pass occupies residues 179 to 195; it reads PNLMRNVIINCTELVTY. Residues 196-212 are Mitochondrial intermembrane-facing; it reads DLMKGALVNHHILADDV. Residues 213–232 form a helical membrane-spanning segment; sequence PCHLLSALVAGFCTTLLASP. The Mitochondrial matrix portion of the chain corresponds to 233–266; that stretch reads VDVVKTRFINSLPGQYPSVPSCAMTMYTKEGPAA. The residue at position 254 (Cys254) is a Cysteine sulfenic acid (-SOH). Residues 267–289 form a helical membrane-spanning segment; it reads FFKGFAPSFLRLGSWNVIMFVCF. Position 269 (Lys269) interacts with fatty acid 16:0. The Mitochondrial intermembrane segment spans residues 290–307; the sequence is EQLKKELMKSRQTVDCTT.

This sequence belongs to the mitochondrial carrier (TC 2.A.29) family. In terms of assembly, most probably functions as a monomer. Binds one purine nucleotide per monomer. However, has also been suggested to function as a homodimer or a homotetramer. Tightly associates with cardiolipin in the mitochondrion inner membrane; may stabilize and regulate its activity. May undergo ubiquitin-mediated proteasomal degradation. In terms of processing, may undergo sulfenylation upon cold exposure. May increase the sensitivity of UCP1 thermogenic function to the activation by noradrenaline probably through structural effects. In terms of tissue distribution, brown adipose tissue.

It is found in the mitochondrion inner membrane. The enzyme catalyses H(+)(in) = H(+)(out). Has no constitutive proton transporter activity and has to be activated by long-chain fatty acids/LCFAs. Inhibited by purine nucleotides. Both purine nucleotides and LCFAs bind the cytosolic side of the transporter and directly compete to activate or inhibit it. Activated by noradrenaline and reactive oxygen species. Despite lacking canonical translational encoding for selenocysteine, a small pool of the protein has been observed to selectively incorporate selenocysteine at 'Cys-254'. Selenocysteine-modified protein is highly sensitive to redox modification and may constitute a pool of protein highly sensitive to activation by elevated levels of reactive oxygen species (ROS). In terms of biological role, mitochondrial protein responsible for thermogenic respiration, a specialized capacity of brown adipose tissue and beige fat that participates in non-shivering adaptive thermogenesis to temperature and diet variations and more generally to the regulation of energy balance. Functions as a long-chain fatty acid/LCFA and proton symporter, simultaneously transporting one LCFA and one proton through the inner mitochondrial membrane. However, LCFAs remaining associated with the transporter via their hydrophobic tails, it results in an apparent transport of protons activated by LCFAs. Thereby, dissipates the mitochondrial proton gradient and converts the energy of substrate oxydation into heat instead of ATP. Regulates the production of reactive oxygen species/ROS by mitochondria. The polypeptide is Mitochondrial brown fat uncoupling protein 1 (Rattus norvegicus (Rat)).